Consider the following 56-residue polypeptide: Potassium channel toxin alpha-KTx 9.2 (56 aa).

The N-terminal stretch at 1–28 (MSRLFTLVLIVLAMNVMMAIISDPVVEA) is a signal peptide. Cystine bridges form between Cys-31–Cys-47, Cys-34–Cys-52, and Cys-38–Cys-54.

As to expression, expressed by the venom gland.

The protein localises to the secreted. In terms of biological role, blocks small conductance calcium-activated potassium channels (KCNN, SK). Low toxicity by intracerebroventricular injection into mice. The sequence is that of Potassium channel toxin alpha-KTx 9.2 from Olivierus martensii (Manchurian scorpion).